A 192-amino-acid chain; its full sequence is EF-hand protein 5 (192 aa).

The segment at 1 to 36 (MKDKAPVSSQQDHFSRGGAVGGKPISDVRGTSRPFY) is disordered. 4 consecutive EF-hand domains span residues 46 to 80 (AELA…GLHL), 81 to 118 (SDEE…EVDD), 119 to 154 (TMLE…GGEC), and 155 to 190 (STPE…HRLN). Residues T100, E102, D107, D132, and T136 each coordinate Ca(2+).

This is EF-hand protein 5 from Trypanosoma brucei brucei.